Consider the following 216-residue polypeptide: ATP-dependent dethiobiotin synthetase BioD (216 aa).

13 to 18 (EVGKTY) contributes to the ATP binding site. T17 is a Mg(2+) binding site. The active site involves K38. T42 contributes to the substrate binding site. ATP is bound by residues D47 and 112 to 115 (EGVG). Positions 47 and 112 each coordinate Mg(2+).

This sequence belongs to the dethiobiotin synthetase family. As to quaternary structure, homodimer. It depends on Mg(2+) as a cofactor.

The protein resides in the cytoplasm. It catalyses the reaction (7R,8S)-7,8-diammoniononanoate + CO2 + ATP = (4R,5S)-dethiobiotin + ADP + phosphate + 3 H(+). It participates in cofactor biosynthesis; biotin biosynthesis; biotin from 7,8-diaminononanoate: step 1/2. Catalyzes a mechanistically unusual reaction, the ATP-dependent insertion of CO2 between the N7 and N8 nitrogen atoms of 7,8-diaminopelargonic acid (DAPA, also called 7,8-diammoniononanoate) to form a ureido ring. The polypeptide is ATP-dependent dethiobiotin synthetase BioD (Endomicrobium trichonymphae).